The primary structure comprises 389 residues: Chalcone synthase 5 (389 aa).

Residue C164 is part of the active site.

Belongs to the thiolase-like superfamily. Chalcone/stilbene synthases family.

It catalyses the reaction (E)-4-coumaroyl-CoA + 3 malonyl-CoA + 3 H(+) = 2',4,4',6'-tetrahydroxychalcone + 3 CO2 + 4 CoA. The protein operates within secondary metabolite biosynthesis; flavonoid biosynthesis. In terms of biological role, the primary product of this enzyme is 4,2',4',6'-tetrahydroxychalcone (also termed naringenin-chalcone or chalcone) which can under specific conditions spontaneously isomerize into naringenin. This Trifolium subterraneum (Subterranean clover) protein is Chalcone synthase 5 (CHS5).